Here is a 217-residue protein sequence, read N- to C-terminus: Methylthioribulose-1-phosphate dehydratase (217 aa).

Residues His-106 and His-108 each coordinate Zn(2+).

This sequence belongs to the aldolase class II family. MtnB subfamily. Zn(2+) serves as cofactor.

The enzyme catalyses 5-(methylsulfanyl)-D-ribulose 1-phosphate = 5-methylsulfanyl-2,3-dioxopentyl phosphate + H2O. It functions in the pathway amino-acid biosynthesis; L-methionine biosynthesis via salvage pathway; L-methionine from S-methyl-5-thio-alpha-D-ribose 1-phosphate: step 2/6. In terms of biological role, catalyzes the dehydration of methylthioribulose-1-phosphate (MTRu-1-P) into 2,3-diketo-5-methylthiopentyl-1-phosphate (DK-MTP-1-P). This chain is Methylthioribulose-1-phosphate dehydratase, found in Xanthomonas euvesicatoria pv. vesicatoria (strain 85-10) (Xanthomonas campestris pv. vesicatoria).